The sequence spans 269 residues: Imidazole glycerol phosphate synthase subunit HisF (269 aa).

Catalysis depends on residues Asp23 and Asp142.

It belongs to the HisA/HisF family. In terms of assembly, heterodimer of HisH and HisF.

The protein localises to the cytoplasm. It carries out the reaction 5-[(5-phospho-1-deoxy-D-ribulos-1-ylimino)methylamino]-1-(5-phospho-beta-D-ribosyl)imidazole-4-carboxamide + L-glutamine = D-erythro-1-(imidazol-4-yl)glycerol 3-phosphate + 5-amino-1-(5-phospho-beta-D-ribosyl)imidazole-4-carboxamide + L-glutamate + H(+). It functions in the pathway amino-acid biosynthesis; L-histidine biosynthesis; L-histidine from 5-phospho-alpha-D-ribose 1-diphosphate: step 5/9. Functionally, IGPS catalyzes the conversion of PRFAR and glutamine to IGP, AICAR and glutamate. The HisF subunit catalyzes the cyclization activity that produces IGP and AICAR from PRFAR using the ammonia provided by the HisH subunit. This is Imidazole glycerol phosphate synthase subunit HisF from Bordetella pertussis (strain Tohama I / ATCC BAA-589 / NCTC 13251).